The chain runs to 213 residues: Probable elongation factor 1-beta/1-delta 1 (213 aa).

This sequence belongs to the EF-1-beta/EF-1-delta family. In terms of assembly, EF-1 is composed of 4 subunits: alpha, beta, delta, and gamma.

Its function is as follows. EF-1-beta and EF-1-delta stimulate the exchange of GDP bound to EF-1-alpha to GTP. This Caenorhabditis elegans protein is Probable elongation factor 1-beta/1-delta 1 (eef-1B.1).